The chain runs to 65 residues: Large ribosomal subunit protein bL31 (65 aa).

Residues C16, C18, C36, and C39 each coordinate Zn(2+).

This sequence belongs to the bacterial ribosomal protein bL31 family. Type A subfamily. In terms of assembly, part of the 50S ribosomal subunit. Requires Zn(2+) as cofactor.

Binds the 23S rRNA. This is Large ribosomal subunit protein bL31 from Brevibacillus brevis (strain 47 / JCM 6285 / NBRC 100599).